The primary structure comprises 213 residues: Putative 3-methyladenine DNA glycosylase (213 aa).

The segment at 165–187 is disordered; sequence GTPVPPDQVRNGPRTGVSGDGGV.

It belongs to the DNA glycosylase MPG family.

The protein is Putative 3-methyladenine DNA glycosylase of Streptomyces avermitilis (strain ATCC 31267 / DSM 46492 / JCM 5070 / NBRC 14893 / NCIMB 12804 / NRRL 8165 / MA-4680).